The following is a 26-amino-acid chain: Citropin-2.1.3 (26 aa).

In terms of tissue distribution, expressed by the dorsal and submental skin glands.

The protein localises to the secreted. In Ranoidea citropa (Australian Blue Mountains tree frog), this protein is Citropin-2.1.3.